Reading from the N-terminus, the 2286-residue chain is DNA polymerase epsilon catalytic subunit A (2286 aa).

The tract at residues 1–30 (MSLRSGGRRRADPGADGEASRDDGATSSVS) is disordered. The segment covering 9-24 (RRADPGADGEASRDDG) has biased composition (basic and acidic residues). A phosphoserine mark is found at serine 1184, serine 1297, serine 1317, and serine 1940. Residues 1939–1969 (DSQKAGGAEDEQENEDDEEERDGEEEEEAEE) are disordered. Residues 1946 to 1969 (AEDEQENEDDEEERDGEEEEEAEE) are compositionally biased toward acidic residues. Zn(2+) contacts are provided by cysteine 2158, cysteine 2161, cysteine 2187, and cysteine 2190. Residues 2158 to 2190 (CRSCNFCRDLDLCKDSSFSEDGAVLPQWLCSNC) form a CysA-type zinc finger. [4Fe-4S] cluster is bound by residues cysteine 2221, cysteine 2224, cysteine 2236, and cysteine 2238. The CysB motif motif lies at 2221–2238 (CLKCRGVKETSMPVYCSC).

It belongs to the DNA polymerase type-B family. As to quaternary structure, component of the DNA polymerase epsilon complex consisting of four subunits: the catalytic subunit POLE and the accessory subunits POLE2, POLE3 and POLE4. Interacts with RAD17 and TOPBP1.

The protein resides in the nucleus. It catalyses the reaction DNA(n) + a 2'-deoxyribonucleoside 5'-triphosphate = DNA(n+1) + diphosphate. Catalytic component of the DNA polymerase epsilon complex. Participates in chromosomal DNA replication. Required during synthesis of the leading DNA strands at the replication fork, binds at/or near replication origins and moves along DNA with the replication fork. Has 3'-5' proofreading exonuclease activity that corrects errors arising during DNA replication. Involved in DNA synthesis during DNA repair. Along with DNA polymerase POLD1 and DNA polymerase POLK, has a role in excision repair (NER) synthesis following UV irradiation. In Homo sapiens (Human), this protein is DNA polymerase epsilon catalytic subunit A.